The sequence spans 838 residues: Histidine biosynthesis trifunctional protein (838 aa).

A phosphoribosyl-AMP cyclohydrolase region spans residues 1–271 (MIFPILPVIS…MVEPRTGYGF (271 aa)). A phosphoribosyl-ATP pyrophosphohydrolase region spans residues 272–360 (CHRETKFTCF…VYFAMVWCIK (89 aa)). The segment at 361–838 (HGVRLADIEK…IRMERMAETK (478 aa)) is histidinol dehydrogenase. Zn(2+) is bound by residues glutamine 660 and histidine 663. Catalysis depends on residues glutamate 729 and histidine 730. The Zn(2+) site is built by aspartate 764 and histidine 823.

In the C-terminal section; belongs to the histidinol dehydrogenase family. Requires Zn(2+) as cofactor.

The catalysed reaction is 1-(5-phospho-beta-D-ribosyl)-5'-AMP + H2O = 1-(5-phospho-beta-D-ribosyl)-5-[(5-phospho-beta-D-ribosylamino)methylideneamino]imidazole-4-carboxamide. The enzyme catalyses 1-(5-phospho-beta-D-ribosyl)-ATP + H2O = 1-(5-phospho-beta-D-ribosyl)-5'-AMP + diphosphate + H(+). It catalyses the reaction L-histidinol + 2 NAD(+) + H2O = L-histidine + 2 NADH + 3 H(+). It functions in the pathway amino-acid biosynthesis; L-histidine biosynthesis; L-histidine from 5-phospho-alpha-D-ribose 1-diphosphate: step 2/9. The protein operates within amino-acid biosynthesis; L-histidine biosynthesis; L-histidine from 5-phospho-alpha-D-ribose 1-diphosphate: step 3/9. It participates in amino-acid biosynthesis; L-histidine biosynthesis; L-histidine from 5-phospho-alpha-D-ribose 1-diphosphate: step 9/9. In Candida albicans (Yeast), this protein is Histidine biosynthesis trifunctional protein (HIS4).